The sequence spans 268 residues: Tryptophan synthase alpha chain (268 aa).

Active-site proton acceptor residues include Glu-49 and Asp-60.

It belongs to the TrpA family. Tetramer of two alpha and two beta chains.

The enzyme catalyses (1S,2R)-1-C-(indol-3-yl)glycerol 3-phosphate + L-serine = D-glyceraldehyde 3-phosphate + L-tryptophan + H2O. It participates in amino-acid biosynthesis; L-tryptophan biosynthesis; L-tryptophan from chorismate: step 5/5. Its function is as follows. The alpha subunit is responsible for the aldol cleavage of indoleglycerol phosphate to indole and glyceraldehyde 3-phosphate. The polypeptide is Tryptophan synthase alpha chain (Salmonella agona (strain SL483)).